A 212-amino-acid chain; its full sequence is Ribosomal RNA small subunit methyltransferase G (212 aa).

Residues Gly-72, Leu-77, 123 to 124, and Arg-138 contribute to the S-adenosyl-L-methionine site; that span reads VE.

This sequence belongs to the methyltransferase superfamily. RNA methyltransferase RsmG family.

The protein resides in the cytoplasm. It catalyses the reaction guanosine(527) in 16S rRNA + S-adenosyl-L-methionine = N(7)-methylguanosine(527) in 16S rRNA + S-adenosyl-L-homocysteine. In terms of biological role, specifically methylates the N7 position of guanine in position 527 of 16S rRNA. The chain is Ribosomal RNA small subunit methyltransferase G from Histophilus somni (strain 2336) (Haemophilus somnus).